The primary structure comprises 43 residues: uncharacterized protein (43 aa).

This is an uncharacterized protein from Homo sapiens (Human).